The primary structure comprises 1009 residues: Mediator of RNA polymerase II transcription subunit 5 (1009 aa).

The protein belongs to the Mediator complex subunit 5 family. Component of the Mediator complex.

Its subcellular location is the nucleus. Functionally, component of the Mediator complex, a coactivator involved in the regulated transcription of nearly all RNA polymerase II-dependent genes. Mediator functions as a bridge to convey information from gene-specific regulatory proteins to the basal RNA polymerase II transcription machinery. Mediator is recruited to promoters by direct interactions with regulatory proteins and serves as a scaffold for the assembly of a functional preinitiation complex with RNA polymerase II and the general transcription factors. The sequence is that of Mediator of RNA polymerase II transcription subunit 5 (nut1) from Neosartorya fischeri (strain ATCC 1020 / DSM 3700 / CBS 544.65 / FGSC A1164 / JCM 1740 / NRRL 181 / WB 181) (Aspergillus fischerianus).